Here is an 84-residue protein sequence, read N- to C-terminus: Exodeoxyribonuclease 7 small subunit (84 aa).

The protein belongs to the XseB family. As to quaternary structure, heterooligomer composed of large and small subunits.

The protein localises to the cytoplasm. It carries out the reaction Exonucleolytic cleavage in either 5'- to 3'- or 3'- to 5'-direction to yield nucleoside 5'-phosphates.. Bidirectionally degrades single-stranded DNA into large acid-insoluble oligonucleotides, which are then degraded further into small acid-soluble oligonucleotides. The sequence is that of Exodeoxyribonuclease 7 small subunit from Haemophilus influenzae (strain ATCC 51907 / DSM 11121 / KW20 / Rd).